Reading from the N-terminus, the 358-residue chain is Transcription factor PCF6 (358 aa).

The disordered stretch occupies residues 1-29 (MEAAVGDGEGGGGGGGRGKRGRGGGGGEM). Positions 7–16 (DGEGGGGGGG) are enriched in gly residues. The TCP domain maps to 52–110 (GKDRHSKVYTAKGIRDRRVRLSVATAIQFYDLQDRLGFDQPSKAIEWLINAASPAIDTL). Disordered regions lie at residues 127–163 (ADAA…DKEV) and 282–308 (ANRG…QQLQ). Composition is skewed to polar residues over residues 143 to 156 (LSNK…SETS) and 285 to 296 (GTLQSNSPSNMS).

Forms homodimers and heterodimers.

It is found in the nucleus. In terms of biological role, transcription activator. Binds the promoter core sequence 5'-GGNCC-3'. In Oryza sativa subsp. indica (Rice), this protein is Transcription factor PCF6 (PCF6).